The sequence spans 255 residues: Triosephosphate isomerase (255 aa).

9–11 (NWK) contacts substrate. His95 serves as the catalytic Electrophile. The Proton acceptor role is filled by Glu167. Substrate contacts are provided by residues Gly173, Ser212, and 233 to 234 (GG).

This sequence belongs to the triosephosphate isomerase family. As to quaternary structure, homodimer.

It localises to the cytoplasm. It carries out the reaction D-glyceraldehyde 3-phosphate = dihydroxyacetone phosphate. The protein operates within carbohydrate biosynthesis; gluconeogenesis. Its pathway is carbohydrate degradation; glycolysis; D-glyceraldehyde 3-phosphate from glycerone phosphate: step 1/1. In terms of biological role, involved in the gluconeogenesis. Catalyzes stereospecifically the conversion of dihydroxyacetone phosphate (DHAP) to D-glyceraldehyde-3-phosphate (G3P). In Escherichia fergusonii (strain ATCC 35469 / DSM 13698 / CCUG 18766 / IAM 14443 / JCM 21226 / LMG 7866 / NBRC 102419 / NCTC 12128 / CDC 0568-73), this protein is Triosephosphate isomerase.